Consider the following 1021-residue polypeptide: Chondroitin sulfate ABC endolyase (1021 aa).

Positions 1–24 (MPIFRFTALAMTLGLLSAPYNAMA) are cleaved as a signal peptide. His43, Met70, Gln73, and Asp211 together coordinate Na(+). The active-site Proton acceptor is the His501. Tyr508 (proton donor) is an active-site residue.

This sequence belongs to the polysaccharide lyase 8 family. As to quaternary structure, monomer.

It is found in the periplasm. The catalysed reaction is Endolytic cleavage of (1-&gt;4)-beta-galactosaminic bonds between N-acetylgalactosamine and either D-glucuronic acid or L-iduronic acid to produce a mixture of Delta(4)-unsaturated oligosaccharides of different sizes that are ultimately degraded to Delta(4)-unsaturated tetra- and disaccharides.. Is inhibited by Zn(2+), Ni(2+), Fe(2+) and Cu(2+). Its function is as follows. Endolytic, broad-specificity glycosaminoglycan lyase, which degrades the polysaccharides chondroitin, chondroitin-4-sulfate, chondroitin-6-sulfate, dermatan sulfate and to a lesser extent hyaluronan, by beta-elimination of 1,4-hexosaminidic bond to unsaturated tetrasaccharides and disaccharides. Is not active against keratan sulfate, heparan sulfate, and heparin. Is able to promote functional recovery in the injured central nervous system (CNS), via its role in the disruption of the normal organization of the extracellular matrix (ECM). The chain is Chondroitin sulfate ABC endolyase from Proteus vulgaris.